Consider the following 436-residue polypeptide: GDP-mannose 6-dehydrogenase (436 aa).

NAD(+)-binding residues include tyrosine 10, valine 11, aspartate 30, lysine 35, threonine 86, and threonine 124. GDP-alpha-D-mannuronate is bound by residues glutamate 161, lysine 210, asparagine 214, histidine 217, asparagine 225, tyrosine 256, tyrosine 257, arginine 259, phenylalanine 262, and glycine 265. Residue cysteine 268 is the Nucleophile of the active site. An NAD(+)-binding site is contributed by lysine 271. The inter-domain linker stretch occupies residues 278–295 (YRASQLDVEHPMLGSLMR). A GDP-alpha-D-mannuronate-binding site is contributed by lysine 324. Arginine 331 contacts NAD(+).

The protein belongs to the UDP-glucose/GDP-mannose dehydrogenase family. Forms a domain-swapped dimer with each peptide contributing to each active site. The dimers assemble further. X-ray structures indicate this enzyme exists as a homotetramer PubMed:12705829, but kinetic and physical results obtained in PubMed:2470755 and PubMed:12135385 indicate that it is probably a homohexamer.

The catalysed reaction is GDP-alpha-D-mannose + 2 NAD(+) + H2O = GDP-alpha-D-mannuronate + 2 NADH + 3 H(+). It functions in the pathway glycan biosynthesis; alginate biosynthesis. Inhibited by GMP, ATP, GDP-D-glucose and maltose. Inhibited by GMP and deamidoNAD. Functionally, catalyzes the oxidation of guanosine diphospho-D-mannose (GDP-D-mannose) to GDP-D-mannuronic acid, a precursor for alginate polymerization. The alginate layer causes a mucoid phenotype and provides a protective barrier against host immune defenses and antibiotics. Other sugars are not used as substrates. The chain is GDP-mannose 6-dehydrogenase from Pseudomonas aeruginosa (strain ATCC 15692 / DSM 22644 / CIP 104116 / JCM 14847 / LMG 12228 / 1C / PRS 101 / PAO1).